The following is a 376-amino-acid chain: Serine-arginine protein 55 (376 aa).

The RRM 1 domain maps to 4-74 (SRVYVGGLPY…ERVVVEPARG (71 aa)). The interval 73–114 (RGTARGSNRDRYDDRYGGRRGGGGGRYNEKNKNSRSSSRYGP) is disordered. Basic and acidic residues predominate over residues 79–89 (SNRDRYDDRYG). The 74-residue stretch at 120–193 (YRLIVENLSS…RRIHLVEDRR (74 aa)) folds into the RRM 2 domain. The residue at position 165 (S165) is a Phosphoserine. Basic and acidic residues predominate over residues 185–194 (RIHLVEDRRG). The interval 185-376 (RIHLVEDRRG…PDRNNESMDD (192 aa)) is disordered. Over residues 196–205 (RSGGGGGSGR) the composition is skewed to gly residues. Composition is skewed to basic residues over residues 215 to 263 (SRSR…SRSN) and 271 to 283 (SKSKSHSRTRSRS). Positions 284 to 304 (PKRERDSRSRSRSVSKRESRS) are enriched in basic and acidic residues.

It belongs to the splicing factor SR family. Post-translationally, extensively phosphorylated on serine residues in the RS domain.

Its subcellular location is the nucleus. Functionally, essential for development. May have a critical role in splicing or in controlling alternative splice site use of at least some pre-mRNA in vivo. Not required for all splicing. May play a general role in the condensation or decondensation of chromatin. The sequence is that of Serine-arginine protein 55 (B52) from Drosophila melanogaster (Fruit fly).